Here is a 1382-residue protein sequence, read N- to C-terminus: Eukaryotic translation initiation factor 3 subunit A (1382 aa).

Lys-68 carries the post-translational modification N6-acetyllysine. Residues 82–120 (NIKSLEDVVRAYLKMAEEKTEAAKEESQQMVLDIEDLDN) are a coiled coil. Residues 315 to 498 (MQRMSTRVLL…RTLSFGSDLN (184 aa)) enclose the PCI domain. Residues Ser-492 and Ser-584 each carry the phosphoserine modification. Residues 664–835 (LDPDFIMAKQ…REERERAERA (172 aa)) form an interaction with EIF3B region. Disordered stretches follow at residues 810 to 844 (KEEE…LREY) and 866 to 1382 (EERE…TVRR). 3 stretches are compositionally biased toward basic and acidic residues: residues 866-1165 (EERE…DDSR), 1177-1328 (GWRE…DPPR), and 1336-1371 (SRDR…TKNE). Residues Ser-881, Ser-882, and Ser-895 each carry the phosphoserine modification. The stretch at 925-934 (DEDRSHRRDE) is repeat 1. Residues 925-1172 (DEDRSHRRDE…DSRPGPWRPL (248 aa)) form a 25 X 10 AA approximate tandem repeats of [DE]-[DE]-[DE]-R-[SEVGFPILV]-[HPSN]-[RSW]-[RL]-[DRGTIHN]-[EPMANLGDT] region. The 2; truncated repeat unit spans residues 935–942 (ERPRRLGD). 20 consecutive repeat copies span residues 943–952 (DEDREPSLRP), 953–962 (DDDRVPRRGM), 963–972 (DDDRGPRRGP), 973–982 (EEDRFSRRGA), 983–992 (DDDRPSWRNT), 993–1002 (DDDRPPRRIA), 1003–1012 (DEDRGNWRHA), 1013–1022 (DDDRPPRRGL), 1023–1032 (DEDRGSWRTA), 1033–1042 (DEDRGPRRGM), 1043–1052 (DDDRGPRRGG), 1054–1063 (DDERSSWRNA), 1064–1073 (DDDRGPRRGL), 1074–1083 (DDDRGPRRGM), 1084–1093 (DDDRGPRRGM), 1094–1103 (DDDRGPRRGM), 1104–1113 (DDDRGPRRGL), 1114–1123 (DDDRGPWRNA), 1124–1133 (DDDRIPRRGA), and 1134–1143 (EDDRGPWRNM). The residue at position 949 (Ser-949) is a Phosphoserine. The residue at position 1028 (Ser-1028) is a Phosphoserine. The stretch at 1144–1152 (DDDRLSRRA) is one 23; truncated repeat. Residues 1153–1162 (DDDRFPRRGD) form repeat 24. Residues 1163-1172 (DSRPGPWRPL) form a 25; approximate repeat. Residues Ser-1188, Ser-1198, Ser-1262, Ser-1336, and Ser-1364 each carry the phosphoserine modification.

Interacts with EIF4G1. Component of the eukaryotic translation initiation factor 3 (eIF-3) complex, which is composed of 13 subunits: EIF3A, EIF3B, EIF3C, EIF3D, EIF3E, EIF3F, EIF3G, EIF3H, EIF3I, EIF3J, EIF3K, EIF3L and EIF3M. The eIF-3 complex appears to include 3 stable modules: module A is composed of EIF3A, EIF3B, EIF3G and EIF3I; module B is composed of EIF3F, EIF3H, and EIF3M; and module C is composed of EIF3C, EIF3D, EIF3E, EIF3L and EIF3K. EIF3C of module C binds EIF3B of module A and EIF3H of module B, thereby linking the three modules. EIF3J is a labile subunit that binds to the eIF-3 complex via EIF3B. The eIF-3 complex interacts with RPS6KB1 under conditions of nutrient depletion. Mitogenic stimulation leads to binding and activation of a complex composed of MTOR and RPTOR, leading to phosphorylation and release of RPS6KB1 and binding of EIF4B to eIF-3. Also interacts with KRT7 and PIWIL2. Post-translationally, phosphorylated. Phosphorylation is enhanced upon serum stimulation.

The protein resides in the cytoplasm. Its function is as follows. RNA-binding component of the eukaryotic translation initiation factor 3 (eIF-3) complex, which is required for several steps in the initiation of protein synthesis. The eIF-3 complex associates with the 40S ribosome and facilitates the recruitment of eIF-1, eIF-1A, eIF-2:GTP:methionyl-tRNAi and eIF-5 to form the 43S pre-initiation complex (43S PIC). The eIF-3 complex stimulates mRNA recruitment to the 43S PIC and scanning of the mRNA for AUG recognition. The eIF-3 complex is also required for disassembly and recycling of post-termination ribosomal complexes and subsequently prevents premature joining of the 40S and 60S ribosomal subunits prior to initiation. The eIF-3 complex specifically targets and initiates translation of a subset of mRNAs involved in cell proliferation, including cell cycling, differentiation and apoptosis, and uses different modes of RNA stem-loop binding to exert either translational activation or repression. Functionally, (Microbial infection) Essential for the initiation of translation on type-1 viral ribosomal entry sites (IRESs), like for HCV, PV, EV71 or BEV translation. In terms of biological role, (Microbial infection) In case of FCV infection, plays a role in the ribosomal termination-reinitiation event leading to the translation of VP2. The chain is Eukaryotic translation initiation factor 3 subunit A from Homo sapiens (Human).